The chain runs to 168 residues: Protein A40 (168 aa).

Residues 1–9 are Cytoplasmic-facing; that stretch reads MNKPKTDYA. A helical; Signal-anchor for type II membrane protein transmembrane segment spans residues 10–30; it reads GYACCVICGLIVGIIFTATLL. The Extracellular portion of the chain corresponds to 31 to 168; sequence KVVERKLVHT…TTFLSYHYFG (138 aa). One can recognise a C-type lectin domain in the interval 63-168; sequence YNNKCIHLST…TTFLSYHYFG (106 aa).

This sequence belongs to the poxviridae A40 protein family.

The protein localises to the host membrane. In Homo sapiens (Human), this protein is Protein A40.